Reading from the N-terminus, the 643-residue chain is Protein disulfide-isomerase A4 (643 aa).

Positions 1-20 (MRPRKAWMLVLLLALVQLLA) are cleaved as a signal peptide. Thioredoxin domains follow at residues 21–168 (VASA…EVSQ) and 170–300 (NWTP…EFLK). The tract at residues 24-54 (AGAPDEDSTDKEDAIEEDEEEDEDDDDDDDD) is disordered. Over residues 27 to 54 (PDEDSTDKEDAIEEDEEEDEDDDDDDDD) the composition is skewed to acidic residues. The CXXC signature appears at 90 to 93 (CGHC). 2 cysteine pairs are disulfide-bonded: cysteine 90/cysteine 93 and cysteine 205/cysteine 208. Lysine 365 carries the post-translational modification N6-acetyllysine. Residues 503 to 634 (FKKGKLKPVI…LSKFIEEHAT (132 aa)) form the Thioredoxin 3 domain. A CXXC motif is present at residues 553 to 556 (CGHC). A disulfide bridge connects residues cysteine 553 and cysteine 556. The Prevents secretion from ER signature appears at 640-643 (KEEL).

This sequence belongs to the protein disulfide isomerase family. In terms of assembly, part of a large chaperone multiprotein complex comprising DNAJB11, HSP90B1, HSPA5, HYOU, PDIA2, PDIA4, PDIA6, PPIB, SDF2L1, UGGT1 and very small amounts of ERP29, but not, or at very low levels, CALR nor CANX. Component of a complex containing at least CRELD2, MANF, MATN3 and PDIA4.

It is found in the endoplasmic reticulum lumen. The protein localises to the melanosome. It carries out the reaction Catalyzes the rearrangement of -S-S- bonds in proteins.. This Bos taurus (Bovine) protein is Protein disulfide-isomerase A4 (PDIA4).